A 677-amino-acid chain; its full sequence is MTQVAKKILVTCALPYANGSIHLGHMLEHIQADVWVRYQRMRGHEVNFICADDAHGTPIMLKAQQLGITPEQMIGEMSQEHQTDFAGFDISYDNYHSTHSDENRELSELIYTRLKENGFIKNRTISQLYDPEKGMFLPDRFVKGTCPKCKSPDQYGDNCEVCGATYSPTELIDPKSVVSGATPVMRDSEHFFFDLPSFSEMLQAWTRSGALQEQVANKMQEWFESGLQQWDISRDAPYFGFEIPNAPGKYFYVWLDAPIGYMGSFKNLCDKRGDTTSFDEYWKKDSTAELYHFIGKDIVYFHSLFWPAMLEGSNFRKPTNLFVHGYVTVNGAKMSKSRGTFIKASTWLNHFDADSLRYYYTAKLSSRIDDIDLNLEDFVQRVNADIVNKVVNLASRNAGFISKRFDGVLAAELADPALYKTFTDAAESIGEAWDSREFGKAIREIMALADVANRYVDEQAPWVVAKQEGRDADLQAICTMGLNMFRVLMTWLKPVLPQLAARAEAFLNSELSWDAIQQPLLAHKVNPFKALYNRIEMKQVEALVEASKEEVKATAAPVTGPLADDPIQETITFDDFAKVDLRVALIENAEFVEGSDKLLRLTLDLGGEKRNVFSGIRSAYPDPQPLIGRLTVMVANLAPRKMRFGISEGMVMAAGPGGKDIFLLSPDDGAKPGQQVK.

Positions 15 to 25 match the 'HIGH' region motif; the sequence is PYANGSIHLGH. Positions 146, 149, 159, and 162 each coordinate Zn(2+). Residues 333–337 carry the 'KMSKS' region motif; the sequence is KMSKS. Residue K336 coordinates ATP. Residues 575–677 enclose the tRNA-binding domain; sequence DFAKVDLRVA…DGAKPGQQVK (103 aa).

Belongs to the class-I aminoacyl-tRNA synthetase family. MetG type 1 subfamily. In terms of assembly, homodimer. Zn(2+) serves as cofactor.

Its subcellular location is the cytoplasm. The catalysed reaction is tRNA(Met) + L-methionine + ATP = L-methionyl-tRNA(Met) + AMP + diphosphate. Functionally, is required not only for elongation of protein synthesis but also for the initiation of all mRNA translation through initiator tRNA(fMet) aminoacylation. The sequence is that of Methionine--tRNA ligase from Klebsiella pneumoniae subsp. pneumoniae (strain ATCC 700721 / MGH 78578).